Consider the following 456-residue polypeptide: Probable serine/threonine-protein kinase DDB_G0277449 (456 aa).

Positions 50–83 are enriched in low complexity; it reads STSPTECEESSSSTITTPSEESLSSGEESSSISD. The tract at residues 50-84 is disordered; the sequence is STSPTECEESSSSTITTPSEESLSSGEESSSISDS. The Protein kinase domain occupies 128 to 383; it reads FIIKHLVGKG…AIEIKRHPFF (256 aa). ATP contacts are provided by residues 134–142 and Lys157; that span reads VGKGGFGKV. Asp251 acts as the Proton acceptor in catalysis. An AGC-kinase C-terminal domain is found at 384–455; that stretch reads KSIQWRKIEN…VRTPVLLESQ (72 aa).

Belongs to the protein kinase superfamily. AGC Ser/Thr protein kinase family.

It catalyses the reaction L-seryl-[protein] + ATP = O-phospho-L-seryl-[protein] + ADP + H(+). The catalysed reaction is L-threonyl-[protein] + ATP = O-phospho-L-threonyl-[protein] + ADP + H(+). The protein is Probable serine/threonine-protein kinase DDB_G0277449 of Dictyostelium discoideum (Social amoeba).